We begin with the raw amino-acid sequence, 314 residues long: MGVMAAVGALPAGAGSLPPLPTLGVPGVPELKPLTRYEAMRLGPGWSHSCHAMLYAPNPGMLFGRIPLRYAVLMQMRFDGLLGFPGGFVDRRYWSLEDGLNRVLGLGLGCVRLTEADYLCSHLTDGPHRVVAHLYARQLTLEELHTIEISAVHSRDHGLEVMGMVRVPLYTQKDRMGGLPNFLANSFVGTAKFQLLFALKILNMVPEEKLAEAVAATQKPKKPAIDHAAVAAAKQANELAAAARAGNEYADSGENQAAAHAAAELAEQQAAGLESQAVLEHLAAVPGAEAVVAELHAQPGADAVLEQPVAEAME.

The N-myristoyl glycine moiety is linked to residue glycine 2.

It belongs to the Nudix hydrolase family. TIRR subfamily. As to quaternary structure, interacts (via the cytoplasmic part) with syndecan-4 (SDC4), but not with other syndecan proteins. Myristoylated in vitro; additional evidence is however required to confirm myristoylation in vivo. Ubiquitously expressed. Expressed in embryonic brain, eyes, gizzard, heart, intestine, kidney, liver, tibia and skin.

The protein localises to the nucleus. Its subcellular location is the cytoplasm. It localises to the cytoskeleton. The protein resides in the cell membrane. It is found in the cell junction. The protein localises to the focal adhesion. Key regulator of TP53BP1 required to stabilize TP53BP1 and regulate its recruitment to chromatin. The chain is Tudor-interacting repair regulator protein (NUDT16L1) from Gallus gallus (Chicken).